Reading from the N-terminus, the 301-residue chain is tRNA (guanine-N(7)-)-methyltransferase (301 aa).

Residues 1-26 (MSETPDSPRPVTPGSQASFGTYGGRP) are disordered. The S-adenosyl-L-methionine site is built by glutamate 85, glutamate 110, asparagine 137, and aspartate 160. Aspartate 160 is an active-site residue. 2 residues coordinate substrate: lysine 164 and aspartate 196. Residues 244–270 (APVREGRAPVSTEHTGPNEGVDEEGGW) form a disordered region. 280–283 (TSFE) lines the substrate pocket.

This sequence belongs to the class I-like SAM-binding methyltransferase superfamily. TrmB family.

It catalyses the reaction guanosine(46) in tRNA + S-adenosyl-L-methionine = N(7)-methylguanosine(46) in tRNA + S-adenosyl-L-homocysteine. It participates in tRNA modification; N(7)-methylguanine-tRNA biosynthesis. Its function is as follows. Catalyzes the formation of N(7)-methylguanine at position 46 (m7G46) in tRNA. The protein is tRNA (guanine-N(7)-)-methyltransferase of Paenarthrobacter aurescens (strain TC1).